The primary structure comprises 367 residues: AdoMet-dependent heme synthase (367 aa).

Residues 15–238 (DGSPTCKLIA…TSMHLKATCA (224 aa)) enclose the Radical SAM core domain. [4Fe-4S] cluster is bound by residues Cys-31, Cys-35, and Cys-38.

This sequence belongs to the radical SAM superfamily. The cofactor is [4Fe-4S] cluster.

The enzyme catalyses Fe-coproporphyrin III + 2 S-adenosyl-L-methionine = heme b + 2 5'-deoxyadenosine + 2 L-methionine + 2 CO2. Its pathway is porphyrin-containing compound metabolism; protoheme biosynthesis. Functionally, involved in siroheme-dependent heme b biosynthesis. Catalyzes the conversion of Fe-coproporphyrin III into heme by the oxidative decarboxylation of two propionate side chains. In Nitratidesulfovibrio vulgaris (strain ATCC 29579 / DSM 644 / CCUG 34227 / NCIMB 8303 / VKM B-1760 / Hildenborough) (Desulfovibrio vulgaris), this protein is AdoMet-dependent heme synthase.